A 184-amino-acid chain; its full sequence is dITP/XTP pyrophosphatase (184 aa).

Substrate is bound at residue 8–13; that stretch reads TGNKGK. 2 residues coordinate Mg(2+): E37 and D66. The active-site Proton acceptor is D66. Substrate contacts are provided by residues S67, 142 to 145, K163, and 168 to 169; these read FGYD and HR.

The protein belongs to the HAM1 NTPase family. In terms of assembly, homodimer. Requires Mg(2+) as cofactor.

It carries out the reaction XTP + H2O = XMP + diphosphate + H(+). It catalyses the reaction dITP + H2O = dIMP + diphosphate + H(+). The enzyme catalyses ITP + H2O = IMP + diphosphate + H(+). Its function is as follows. Pyrophosphatase that catalyzes the hydrolysis of nucleoside triphosphates to their monophosphate derivatives, with a high preference for the non-canonical purine nucleotides XTP (xanthosine triphosphate), dITP (deoxyinosine triphosphate) and ITP. Seems to function as a house-cleaning enzyme that removes non-canonical purine nucleotides from the nucleotide pool, thus preventing their incorporation into DNA/RNA and avoiding chromosomal lesions. The protein is dITP/XTP pyrophosphatase of Methanosarcina acetivorans (strain ATCC 35395 / DSM 2834 / JCM 12185 / C2A).